The chain runs to 131 residues: C-type natriuretic peptide 1 (131 aa).

The N-terminal stretch at 1–22 is a signal peptide; it reads MLCPVLLCATLLLLTPFEVTEA. The propeptide occupies 23–109; that stretch reads RALHPSADAV…KRAEPDRSRR (87 aa). A disulfide bond links Cys115 and Cys131.

This sequence belongs to the natriuretic peptide family. In terms of tissue distribution, brain and spinal cord.

The protein localises to the secreted. Functionally, exhibits natriuretic and vasodepressant activity. Has cGMP-stimulating activity. May help to regulate body fluid homeostasis in a variety of aquatic environments. This Oryzias latipes (Japanese rice fish) protein is C-type natriuretic peptide 1.